A 241-amino-acid chain; its full sequence is Ribonuclease PH (241 aa).

Residues Arg-87 and 125 to 127 each bind phosphate; that span reads GTR.

Belongs to the RNase PH family. Homohexameric ring arranged as a trimer of dimers.

The enzyme catalyses tRNA(n+1) + phosphate = tRNA(n) + a ribonucleoside 5'-diphosphate. Its function is as follows. Phosphorolytic 3'-5' exoribonuclease that plays an important role in tRNA 3'-end maturation. Removes nucleotide residues following the 3'-CCA terminus of tRNAs; can also add nucleotides to the ends of RNA molecules by using nucleoside diphosphates as substrates, but this may not be physiologically important. Probably plays a role in initiation of 16S rRNA degradation (leading to ribosome degradation) during starvation. This is Ribonuclease PH from Nitrosomonas europaea (strain ATCC 19718 / CIP 103999 / KCTC 2705 / NBRC 14298).